The primary structure comprises 499 residues: MDGHTNGTNGSCSKPCEPLTDYCIPDYILNPDSEQVLVDQAPCCPVVVFINSRSGGQLGSSLIKTYRELLNKAQVFDLSEEAPEKVLHRLYCNFEKLKSNGDPIAFQIQSNLRLIVAGGDGTASWLLGVVSDLKLSHPPPIATVPLGTGNNLPFSFGWGKKNPTTDQEAVKSFLGQVKKAREMNIDSWHIIMRMRAPQEGPCEPIAPLELPHSLHAFHRVSGSDSLNMEGYHTYRGGFWNYFSMGMDAQVSYEFHSERKRNPEKFKNQLTNQSTYAKLGLKQGWFAASLTHPSSRNIAQLAKVRIMKRPGGQWEELKIPRSIRSIVCLNLPSFSGGLNPWGTPGTRKVQDRDLTAPFVDDGLIEVVGFRDAWHGLVLLAPNGHGTRLAQAHRIRFEFHKGAAEHTFMRIDGEPWKQPLPKDDDTVVVEISHLRQVTMLASDPCKSKSVNDPSSPMCCSNHDDDERNSLEDEDEWEEGRKKFGAADTFKFPDEVDVAHLS.

In terms of domain architecture, DAGKc spans 41-194 (APCCPVVVFI…IDSWHIIMRM (154 aa)). Positions 442 to 479 (PCKSKSVNDPSSPMCCSNHDDDERNSLEDEDEWEEGRK) are disordered. Positions 446–456 (KSVNDPSSPMC) are enriched in polar residues. Residues 459–468 (NHDDDERNSL) are compositionally biased toward basic and acidic residues.

This sequence belongs to the eukaryotic diacylglycerol kinase family. In terms of assembly, monomer. In terms of tissue distribution, highly expressed in roots.

It carries out the reaction a 1,2-diacyl-sn-glycerol + ATP = a 1,2-diacyl-sn-glycero-3-phosphate + ADP + H(+). Functionally, phosphorylates the second messenger diacylglycerol (DAG) to generate phosphatidic acid (PA), another important signaling molecule. PA is required for plant development and responses to abiotic stress. May play a role in disease resistance responses to pathogen attack. Modulates root architecture by regulating the ratio of DAG and PA, which have opposite effect on the promotion or suppression of lateral roots vs seminal roots. Suppresses lateral root number, but promotes seminal root and crown root thickness. The chain is Diacylglycerol kinase 1 from Oryza sativa subsp. japonica (Rice).